A 602-amino-acid polypeptide reads, in one-letter code: Elongation factor 4 (602 aa).

One can recognise a tr-type G domain in the interval Glu-7–Lys-188. Residues Asp-19–Thr-24 and Asn-135–Asp-138 contribute to the GTP site.

The protein belongs to the TRAFAC class translation factor GTPase superfamily. Classic translation factor GTPase family. LepA subfamily.

The protein localises to the cell inner membrane. It carries out the reaction GTP + H2O = GDP + phosphate + H(+). Required for accurate and efficient protein synthesis under certain stress conditions. May act as a fidelity factor of the translation reaction, by catalyzing a one-codon backward translocation of tRNAs on improperly translocated ribosomes. Back-translocation proceeds from a post-translocation (POST) complex to a pre-translocation (PRE) complex, thus giving elongation factor G a second chance to translocate the tRNAs correctly. Binds to ribosomes in a GTP-dependent manner. This Chlamydia pneumoniae (Chlamydophila pneumoniae) protein is Elongation factor 4.